The following is a 430-amino-acid chain: Histidine--tRNA ligase (430 aa).

Belongs to the class-II aminoacyl-tRNA synthetase family. As to quaternary structure, homodimer.

The protein localises to the cytoplasm. It catalyses the reaction tRNA(His) + L-histidine + ATP = L-histidyl-tRNA(His) + AMP + diphosphate + H(+). This chain is Histidine--tRNA ligase, found in Chlamydia abortus (strain DSM 27085 / S26/3) (Chlamydophila abortus).